Consider the following 298-residue polypeptide: tRNA dimethylallyltransferase 2 (298 aa).

ATP is bound at residue 19–26 (GATATGKT). 21-26 (TATGKT) contributes to the substrate binding site. Residues 44–47 (DSRQ) form an interaction with substrate tRNA region.

It belongs to the IPP transferase family. In terms of assembly, monomer. Mg(2+) serves as cofactor.

It catalyses the reaction adenosine(37) in tRNA + dimethylallyl diphosphate = N(6)-dimethylallyladenosine(37) in tRNA + diphosphate. In terms of biological role, catalyzes the transfer of a dimethylallyl group onto the adenine at position 37 in tRNAs that read codons beginning with uridine, leading to the formation of N6-(dimethylallyl)adenosine (i(6)A). This chain is tRNA dimethylallyltransferase 2, found in Treponema denticola (strain ATCC 35405 / DSM 14222 / CIP 103919 / JCM 8153 / KCTC 15104).